The sequence spans 59 residues: Large ribosomal subunit protein uL30 (59 aa).

It belongs to the universal ribosomal protein uL30 family. As to quaternary structure, part of the 50S ribosomal subunit.

In Actinobacillus pleuropneumoniae serotype 7 (strain AP76), this protein is Large ribosomal subunit protein uL30.